Reading from the N-terminus, the 129-residue chain is Small ribosomal subunit protein uS11 (129 aa).

This sequence belongs to the universal ribosomal protein uS11 family. As to quaternary structure, part of the 30S ribosomal subunit. Interacts with proteins S7 and S18. Binds to IF-3.

Functionally, located on the platform of the 30S subunit, it bridges several disparate RNA helices of the 16S rRNA. Forms part of the Shine-Dalgarno cleft in the 70S ribosome. The protein is Small ribosomal subunit protein uS11 of Listeria innocua serovar 6a (strain ATCC BAA-680 / CLIP 11262).